A 1081-amino-acid chain; its full sequence is Disheveled-associated activator of morphogenesis 1-A (1081 aa).

Positions 45 to 418 constitute a GBD/FH3 domain; sequence LPVPPVEELD…QIVIQNEKGQ (374 aa). Disordered regions lie at residues 455 to 476 and 519 to 615; these read KEHNELQQKLEKKERECDAKTQ and RTVC…PLKS. Residues 526 to 536 show a composition bias toward pro residues; the sequence is PGGPPPPPGAP. Residues 538–547 are compositionally biased toward low complexity; sequence GPMSMPSGNF. The segment covering 548–585 has biased composition (pro residues); that stretch reads MPPPPPPPPPFPGGMAPPPPPPPPPPPPPGGPPPPPGL. The span at 586–600 shows a compositional bias: low complexity; it reads PLLGAAPPGAPLGLS. One can recognise an FH2 domain in the interval 603 to 1012; sequence KKNIPQPKNP…EERRIRMEAQ (410 aa). Positions 696-705 are actin-binding; the sequence is AQNCNILLSR. The segment covering 1013 to 1029 has biased composition (basic and acidic residues); the sequence is LKEQRERERKARKAKEN. Disordered regions lie at residues 1013–1038 and 1060–1081; these read LKEQRERERKARKAKENGEEEGEFDD and RKRIVSQTTESSRERPVTKLNY. In terms of domain architecture, DAD spans 1030-1061; it reads GEEEGEFDDLVSALRSGEVFDKDLSKLKRNRK. Over residues 1070-1081 the composition is skewed to basic and acidic residues; sequence SSRERPVTKLNY.

The protein localises to the cytoplasm. Its subcellular location is the cytoskeleton. The protein resides in the cilium basal body. Its function is as follows. Binds to disheveled (dsh) and Rho, and mediates Wnt-induced dsh-Rho complex formation during gastrulation. May play a role as a scaffolding protein to recruit Rho-GDP and Rho-GEF, thereby enhancing Rho-GTP formation. Can direct nucleation and elongation of new actin filaments. Involved in building functional cilia. Involved in building functional cilia. Involved in the organization of the subapical actin network in multiciliated epithelial cells. The polypeptide is Disheveled-associated activator of morphogenesis 1-A (daam1-a) (Xenopus laevis (African clawed frog)).